Reading from the N-terminus, the 123-residue chain is Large ribosomal subunit protein bL19 (123 aa).

The protein belongs to the bacterial ribosomal protein bL19 family.

In terms of biological role, this protein is located at the 30S-50S ribosomal subunit interface and may play a role in the structure and function of the aminoacyl-tRNA binding site. The polypeptide is Large ribosomal subunit protein bL19 (Thermomicrobium roseum (strain ATCC 27502 / DSM 5159 / P-2)).